The sequence spans 231 residues: Small ribosomal subunit protein bS18c (231 aa).

Disordered stretches follow at residues 1–31 and 95–231; these read MEKSERPLIKKKRPFRKKKRSFRKRRSPIES and QKEE…TRKK. Residues 9–26 show a composition bias toward basic residues; the sequence is IKKKRPFRKKKRSFRKRR. 3 stretches are compositionally biased toward basic and acidic residues: residues 95-151, 159-169, and 212-231; these read QKEE…EFQR, TNEKQTNEKQT, and TNEKQTKSNDRTTDLRTRKK.

It belongs to the bacterial ribosomal protein bS18 family. In terms of assembly, part of the 30S ribosomal subunit.

It is found in the plastid. The protein resides in the chloroplast. This Jasminum nudiflorum (Winter jasmine) protein is Small ribosomal subunit protein bS18c.